The following is a 92-amino-acid chain: Kappa-scoloptoxin(15)-Ssd2a (92 aa).

Residues Met-1–Gly-20 form the signal peptide.

In terms of processing, contains 3 disulfide bonds. In terms of tissue distribution, expressed by the venom gland.

It localises to the secreted. Functionally, inhibits voltage-gated potassium channels (Kv) (IC(50)=about 10 nM), when tested on DRG neurons. This Scolopendra dehaani (Thai centipede) protein is Kappa-scoloptoxin(15)-Ssd2a.